The chain runs to 137 residues: Acidic phospholipase A2 beta-bungarotoxin A6 chain (137 aa).

Residues 1–9 (AVCVSLLGA) form the signal peptide. Residues 10 to 17 (ANIPPQHL) constitute a propeptide that is removed on maturation. 6 disulfide bridges follow: cysteine 44–cysteine 136, cysteine 46–cysteine 62, cysteine 61–cysteine 117, cysteine 68–cysteine 110, cysteine 78–cysteine 103, and cysteine 96–cysteine 108. Tyrosine 45, glycine 47, and glycine 49 together coordinate Ca(2+). Residue histidine 65 is part of the active site. Aspartate 66 contacts Ca(2+). Aspartate 111 is a catalytic residue.

Belongs to the phospholipase A2 family. Group I subfamily. D49 sub-subfamily. In terms of assembly, heterodimer; disulfide-linked. The A chains have phospholipase A2 activity and the B chains show homology with the basic protease inhibitors. It depends on Ca(2+) as a cofactor. Expressed by the venom gland.

It is found in the secreted. The catalysed reaction is a 1,2-diacyl-sn-glycero-3-phosphocholine + H2O = a 1-acyl-sn-glycero-3-phosphocholine + a fatty acid + H(+). Functionally, snake venom phospholipase A2 (PLA2) that inhibits neuromuscular transmission by blocking acetylcholine release from the nerve termini. PLA2 catalyzes the calcium-dependent hydrolysis of the 2-acyl groups in 3-sn-phosphoglycerides. This Bungarus multicinctus (Many-banded krait) protein is Acidic phospholipase A2 beta-bungarotoxin A6 chain.